Consider the following 260-residue polypeptide: Global transcriptional regulator CodY (260 aa).

Residues Met1 to Leu159 form a GAF domain region. Positions Ala207–Arg226 form a DNA-binding region, H-T-H motif.

It belongs to the CodY family.

It localises to the cytoplasm. DNA-binding global transcriptional regulator which is involved in the adaptive response to starvation and acts by directly or indirectly controlling the expression of numerous genes in response to nutrient availability. During rapid exponential growth, CodY is highly active and represses genes whose products allow adaptation to nutrient depletion. This is Global transcriptional regulator CodY from Streptococcus pyogenes serotype M3 (strain SSI-1).